Consider the following 263-residue polypeptide: HTH-type transcriptional repressor NanR (263 aa).

Residues 1 to 23 form a disordered region; the sequence is MSPMNAFDPQAEDSTTTIGRNLR. Positions 30–98 constitute an HTH gntR-type domain; that stretch reads KKLSEMVEEE…NGERARVSRP (69 aa). A DNA-binding region (H-T-H motif) is located at residues 58–77; sequence ERELMAFFNVGRPSVREALA.

Belongs to the NanR family.

In terms of biological role, transcriptional repressor that controls expression of the genes required for the catabolism of sialic acids. In Escherichia coli O45:K1 (strain S88 / ExPEC), this protein is HTH-type transcriptional repressor NanR.